Here is a 383-residue protein sequence, read N- to C-terminus: Chitinase-3-like protein 1 (383 aa).

The first 21 residues, Met-1–Ala-21, serve as a signal peptide directing secretion. In terms of domain architecture, GH18 spans Tyr-22–Thr-383. Cys-26 and Cys-51 form a disulfide bridge. An N-linked (GlcNAc...) asparagine glycan is attached at Asn-60. Chitin-binding positions include Glu-70–Trp-71, Gly-97–Asn-100, Tyr-141, Met-204–Asp-207, and Arg-263. The cysteines at positions 300 and 364 are disulfide-linked. The important for AKT1 activation and IL8 production stretch occupies residues Gln-324–Val-338. Trp-352 provides a ligand contact to chitin.

Belongs to the glycosyl hydrolase 18 family. In terms of assembly, monomer. In terms of processing, glycosylated. As to expression, present in activated macrophages, articular chondrocytes, synovial cells as well as in liver. Very low or undetectable expression in non-inflammatory colon. Undetectable in muscle tissues, lung, pancreas, mononuclear cells, or fibroblasts.

It localises to the secreted. The protein localises to the extracellular space. It is found in the cytoplasm. The protein resides in the perinuclear region. Its subcellular location is the endoplasmic reticulum. Functionally, carbohydrate-binding lectin with a preference for chitin. Has no chitinase activity. May play a role in tissue remodeling and in the capacity of cells to respond to and cope with changes in their environment. Plays a role in T-helper cell type 2 (Th2) inflammatory response and IL-13-induced inflammation, regulating allergen sensitization, inflammatory cell apoptosis, dendritic cell accumulation and M2 macrophage differentiation. Facilitates invasion of pathogenic enteric bacteria into colonic mucosa and lymphoid organs. Mediates activation of AKT1 signaling pathway and subsequent IL8 production in colonic epithelial cells. Regulates antibacterial responses in lung by contributing to macrophage bacterial killing, controlling bacterial dissemination and augmenting host tolerance. Also regulates hyperoxia-induced injury, inflammation and epithelial apoptosis in lung. The polypeptide is Chitinase-3-like protein 1 (CHI3L1) (Homo sapiens (Human)).